The primary structure comprises 115 residues: UPF0342 protein Bsph_0375 (115 aa).

Belongs to the UPF0342 family.

The chain is UPF0342 protein Bsph_0375 from Lysinibacillus sphaericus (strain C3-41).